The primary structure comprises 63 residues: uncharacterized protein (63 aa).

Positions 1-17 (MRYTDSRKLTPETDANH) are enriched in basic and acidic residues. The segment at 1-32 (MRYTDSRKLTPETDANHKTASPQPIRRISSQT) is disordered. Residues 18–32 (KTASPQPIRRISSQT) show a composition bias toward polar residues.

To Y.enterocolitica HemP.

This is an uncharacterized protein from Escherichia coli (strain K12).